Consider the following 693-residue polypeptide: Lamina-associated polypeptide 2, isoforms alpha/zeta (693 aa).

The 44-residue stretch at 5 to 48 folds into the LEM-like domain; it reads LEDPSVLTKDKLKSELVANNVTLPAGEQRKDVYVQLYLQHLTAR. Disordered stretches follow at residues 48 to 113, 148 to 211, and 227 to 270; these read RNRP…DVTE, LREQ…LAST, and TRPP…KLAP. The linker stretch occupies residues 49–107; it reads NRPPLAAGANSKGPPDFSSDEEREPTPVLGSGASVGRGRGAVGRKATKKTDKPRLEDKD. Phosphoserine occurs at positions 59, 66, and 67. Threonine 74 bears the Phosphothreonine mark. Phosphoserine occurs at positions 79 and 82. An omega-N-methylarginine mark is found at arginine 85 and arginine 87. A compositionally biased stretch (basic and acidic residues) spans 96-105; that stretch reads KKTDKPRLED. One can recognise an LEM domain in the interval 108–152; that stretch reads DLDVTELSNEELLDQLVRYGVNPGPIVGTTRKLYEKKLLKLREQG. At threonine 153 the chain carries Phosphothreonine. Residues 154-177 are compositionally biased toward polar residues; it reads ESRSSTPLPTVSSSAENTRQNGSN. Residues serine 155 and serine 158 each carry the phosphoserine modification. 2 positions are modified to phosphothreonine: threonine 159 and threonine 163. Serine 165 and serine 167 each carry phosphoserine. The span at 178-190 shows a compositional bias: basic and acidic residues; that stretch reads DSDRYSDNDEGKK. The Nuclear localization signal signature appears at 190-196; sequence KKEHKKV. N6-acetyllysine is present on serine 206. Residues 245-254 are compositionally biased toward basic and acidic residues; sequence TKRDPPRETC. Serine 310 carries the phosphoserine modification. At arginine 329 the chain carries Omega-N-methylarginine. Positions 332-351 are disordered; it reads KSRAQPLRAEEPGVSDQSVF. Serine 349, serine 352, serine 368, serine 420, and serine 422 each carry phosphoserine. The segment covering 412 to 422 has biased composition (low complexity); it reads QSSYQDSESLS. Residues 412–442 are disordered; sequence QSSYQDSESLSPPRKVPRLSEKPARGGDSGS. Residues 557-656 adopt a coiled-coil conformation; it reads TESCDKHLDL…MGRRYLWLKD (100 aa). N6-acetyllysine is present on lysine 655.

Belongs to the LEM family. As to quaternary structure, homooligomer. Interacts with LMNA, BANF1 and RB1 and with chromosomes. Associates directly or indirectly with lamins at specific cell-cycle stages. Interacts with CMTM6. Post-translationally, phosphorylated in a mitose-specific manner.

Its subcellular location is the nucleus. The protein resides in the chromosome. Functionally, may be involved in the structural organization of the nucleus and in the post-mitotic nuclear assembly. Plays an important role, together with LMNA, in the nuclear anchorage of RB1. This Mus musculus (Mouse) protein is Lamina-associated polypeptide 2, isoforms alpha/zeta (Tmpo).